The sequence spans 353 residues: UDP-N-acetylglucosamine--N-acetylmuramyl-(pentapeptide) pyrophosphoryl-undecaprenol N-acetylglucosamine transferase (353 aa).

UDP-N-acetyl-alpha-D-glucosamine-binding positions include N123, R161, S189, I243, 262–267 (ALTVSE), and Q287.

This sequence belongs to the glycosyltransferase 28 family. MurG subfamily.

The protein localises to the cell membrane. It carries out the reaction di-trans,octa-cis-undecaprenyl diphospho-N-acetyl-alpha-D-muramoyl-L-alanyl-D-glutamyl-meso-2,6-diaminopimeloyl-D-alanyl-D-alanine + UDP-N-acetyl-alpha-D-glucosamine = di-trans,octa-cis-undecaprenyl diphospho-[N-acetyl-alpha-D-glucosaminyl-(1-&gt;4)]-N-acetyl-alpha-D-muramoyl-L-alanyl-D-glutamyl-meso-2,6-diaminopimeloyl-D-alanyl-D-alanine + UDP + H(+). It functions in the pathway cell wall biogenesis; peptidoglycan biosynthesis. Its function is as follows. Cell wall formation. Catalyzes the transfer of a GlcNAc subunit on undecaprenyl-pyrophosphoryl-MurNAc-pentapeptide (lipid intermediate I) to form undecaprenyl-pyrophosphoryl-MurNAc-(pentapeptide)GlcNAc (lipid intermediate II). This chain is UDP-N-acetylglucosamine--N-acetylmuramyl-(pentapeptide) pyrophosphoryl-undecaprenol N-acetylglucosamine transferase, found in Buchnera aphidicola subsp. Baizongia pistaciae (strain Bp).